A 490-amino-acid chain; its full sequence is MHNLSAQPWQAKMANLTYDNVTLSNRSEVAIQPPTNYKTVELVFIATVTGSLSLVTVVGNILVMLSIKVNRQLQTVNNYFLFSLACADLIIGVFSMNLYTVYIIKGYWPLGAVVCDLWLALDYVVSNASVMNLLIISFDRYFCVTKPLTYPARRTTKMAGLMIAAAWILSFILWAPAILFWQFIVGKRTVHERECYIQFLSNPAVTFGTAIAAFYLPVVIMTVLYIHISLASRSRVRRHKPESRKERKGKSLSFFKAPPVKQNNNNSPKRAVEVKEEVRNGKVDDQPSAQTEATGQQEEKETSNESSTVSMTQTTKDKPTTEILPAGQGQSPAHPRVNPTSKWSKIKIVTKQTGTESVTAIEIVPAKAGASDHNSLSNSRPANVARKFASIARSQVRKKRQMAAREKKVTRTIFAILLAFILTWTPYNVMVLINTFCETCVPETVWSIGYWLCYVNSTINPACYALCNATFKKTFKHLLMCQYRNIGTAR.

At 1 to 42 (MHNLSAQPWQAKMANLTYDNVTLSNRSEVAIQPPTNYKTVEL) the chain is on the extracellular side. N-linked (GlcNAc...) asparagine glycosylation is found at Asn-3, Asn-15, Asn-20, and Asn-25. The helical transmembrane segment at 43-64 (VFIATVTGSLSLVTVVGNILVM) threads the bilayer. The Cytoplasmic segment spans residues 65 to 78 (LSIKVNRQLQTVNN). The chain crosses the membrane as a helical span at residues 79–99 (YFLFSLACADLIIGVFSMNLY). The Extracellular segment spans residues 100–116 (TVYIIKGYWPLGAVVCD). An intrachain disulfide couples Cys-115 to Cys-195. Residues 117 to 138 (LWLALDYVVSNASVMNLLIISF) traverse the membrane as a helical segment. Residues 139–158 (DRYFCVTKPLTYPARRTTKM) lie on the Cytoplasmic side of the membrane. A helical transmembrane segment spans residues 159–181 (AGLMIAAAWILSFILWAPAILFW). The Extracellular portion of the chain corresponds to 182 to 203 (QFIVGKRTVHERECYIQFLSNP). A helical transmembrane segment spans residues 204 to 226 (AVTFGTAIAAFYLPVVIMTVLYI). Over 227-412 (HISLASRSRV…AAREKKVTRT (186 aa)) the chain is Cytoplasmic. The segment covering 236–250 (VRRHKPESRKERKGK) has biased composition (basic residues). Residues 236-343 (VRRHKPESRK…HPRVNPTSKW (108 aa)) form a disordered region. Basic and acidic residues predominate over residues 270–285 (RAVEVKEEVRNGKVDD). Polar residues-rich tracts occupy residues 287-296 (PSAQTEATGQ) and 304-314 (NESSTVSMTQT). A helical transmembrane segment spans residues 413 to 433 (IFAILLAFILTWTPYNVMVLI). At 434-447 (NTFCETCVPETVWS) the chain is on the extracellular side. Residues 448 to 467 (IGYWLCYVNSTINPACYALC) form a helical membrane-spanning segment. At 468–490 (NATFKKTFKHLLMCQYRNIGTAR) the chain is on the cytoplasmic side.

It belongs to the G-protein coupled receptor 1 family. Muscarinic acetylcholine receptor subfamily. CHRM4 sub-subfamily. As to expression, expressed in heart and brain.

Its subcellular location is the cell membrane. The protein resides in the postsynaptic cell membrane. Functionally, the muscarinic acetylcholine receptor mediates various cellular responses, including inhibition of adenylate cyclase, breakdown of phosphoinositides and modulation of potassium channels through the action of G proteins. Primary transducing effect is inhibition of adenylate cyclase. May couple to multiple functional responses in cell lines. In Gallus gallus (Chicken), this protein is Muscarinic acetylcholine receptor M4 (CHRM4).